We begin with the raw amino-acid sequence, 478 residues long: Phosphatidylinositol 4-kinase type 2-alpha (478 aa).

Met1 carries the N-acetylmethionine modification. The segment at Met1–Arg57 is disordered. Ser5, Ser9, Ser43, Ser46, and Ser50 each carry phosphoserine. Residues Val31–Gly44 show a composition bias toward low complexity. The 330-residue stretch at Ser123 to Thr452 folds into the PI3K/PI4K catalytic domain. Residues Ile129–Gly135 are G-loop. ATP contacts are provided by residues Tyr130–Ser136 and Lys151. Residues Glu156–Tyr158 form an important for substrate binding region. The segment at Lys164–Cys177 is important for interaction with membranes. S-palmitoyl cysteine attachment occurs at residues Cys173, Cys174, Cys176, and Cys177. Gln260–Val263 contacts ATP. Residues Lys267 to Arg275 form an important for interaction with membranes region. The segment at Arg304–Asn312 is catalytic loop. The tract at residues Ala343–Phe363 is activation loop. Asp345 is a binding site for ATP. The segment at Trp358–Trp367 is important for interaction with membranes. At Ser461 the chain carries Phosphoserine.

The protein belongs to the PI3/PI4-kinase family. Type II PI4K subfamily. In terms of assembly, associates with the BLOC-1 and the AP-3 complexes; the BLOC-1 complex is required for optimal binding of PI4K2A to the AP-3 complex. Interacts with BLOC1S5 and DTNBP1. Interacts with FOS; this interaction may enhance phosphatidylinositol phosphorylation activity. Interacts with ITCH. Interacts with ATG9A. In terms of processing, ubiquitinated by ITCH; this does not lead to proteasomal degradation. Palmitoylated. Palmitoylated by ZDHHC3 and ZDHHC7 in the CCPCC motif. Palmitoylation is cholesterol-dependent, and required for TGN localization. In terms of tissue distribution, detected in adult brain, especially in neurons in the cerebellum, brain cortex, dorsal root ganglion and spinal cord (at protein level).

It is found in the golgi apparatus. It localises to the trans-Golgi network membrane. Its subcellular location is the membrane raft. The protein localises to the endosome. The protein resides in the endosome membrane. It is found in the cytoplasmic vesicle. It localises to the cell projection. Its subcellular location is the dendrite. The protein localises to the presynaptic cell membrane. The protein resides in the synapse. It is found in the synaptosome. It localises to the mitochondrion. Its subcellular location is the membrane. The protein localises to the cell membrane. The protein resides in the perikaryon. It is found in the neuron projection. The catalysed reaction is a 1,2-diacyl-sn-glycero-3-phospho-(1D-myo-inositol) + ATP = a 1,2-diacyl-sn-glycero-3-phospho-(1D-myo-inositol 4-phosphate) + ADP + H(+). Functionally, membrane-bound phosphatidylinositol-4 kinase (PI4-kinase) that catalyzes the phosphorylation of phosphatidylinositol (PI) to phosphatidylinositol 4-phosphate (PI4P), a lipid that plays important roles in endocytosis, Golgi function, protein sorting and membrane trafficking and is required for prolonged survival of neurons. Besides, phosphorylation of phosphatidylinositol (PI) to phosphatidylinositol 4-phosphate (PI4P) is the first committed step in the generation of phosphatidylinositol 4,5-bisphosphate (PIP2), a precursor of the second messenger inositol 1,4,5-trisphosphate (InsP3). The polypeptide is Phosphatidylinositol 4-kinase type 2-alpha (Pi4k2a) (Rattus norvegicus (Rat)).